The chain runs to 704 residues: Probable ferric reduction oxidase 1 (704 aa).

At 1-16 the chain is on the cytoplasmic side; the sequence is MGVGEMNKEVIDKVIK. A helical membrane pass occupies residues 17–36; it reads FLMMVILMGTIVIWIMMPTS. Over 37–62 the chain is Lumenal; it reads TYKEIWLTSMRAKLGKSIYYGRPGVN. The helical transmembrane segment at 63–81 threads the bilayer; that stretch reads LLVYMFPMILLAFLGCIYL. Residues 82-115 lie on the Cytoplasmic side of the membrane; the sequence is HLKKSTTVNQFNSGVEKKRAKFGALRRPMLVNGP. A helical transmembrane segment spans residues 116–139; that stretch reads LGIVTVTEVMFLTMFMALLLWSLA. At 140–207 the chain is on the lumenal side; sequence NYMYRTFVNV…VGLTSESSIK (68 aa). The Ferric oxidoreductase domain occupies 174-294; that stretch reads GIVGNICLAF…YLYIVFMLFF (121 aa). Residues 208–231 traverse the membrane as a helical segment; it reads YHIWLGHLVMIIFTSHGLCYFIYW. 2 residues coordinate heme: His-209 and His-223. Topologically, residues 232 to 282 are cytoplasmic; that stretch reads ISKNQLVSKMLEWDRTAVSNLAGEIALVAGLMMWVTTYPKIRRRLFEVFFY. The chain crosses the membrane as a helical span at residues 283 to 307; the sequence is SHYLYIVFMLFFVFHVGISHALIPL. Residues His-284 and His-297 each contribute to the heme site. Residues 308-329 are Lumenal-facing; that stretch reads PGFYIFLVDRFLRFLQSRNNVK. Positions 323–430 constitute an FAD-binding FR-type domain; it reads QSRNNVKLVS…EGPYGPSSTD (108 aa). A helical transmembrane segment spans residues 330–350; it reads LVSARVLPCDTVELNFSKNPM. Residues 351-550 are Cytoplasmic-facing; the sequence is LMYSPTSTMF…PISPILGPNS (200 aa). 372 to 375 contributes to the FAD binding site; that stretch reads HPFT. 422–425 is a binding site for NAD(+); sequence GPYG. Residues 551-573 traverse the membrane as a helical segment; sequence WLCLAAILSSSFMIFIVIIAIIT. The Lumenal portion of the chain corresponds to 574–592; the sequence is RYHIHPIDQNSEKYTWAYK. Residues 593 to 614 form a helical membrane-spanning segment; the sequence is SLIYLVSISITVVTTSTAAMLW. The Cytoplasmic portion of the chain corresponds to 615–704; it reads NKKKYYAKND…LHFESISFSW (90 aa).

This sequence belongs to the ferric reductase (FRE) family. It depends on FAD as a cofactor. In terms of tissue distribution, expressed in siliques. Detected in roots.

It is found in the membrane. It carries out the reaction 2 a Fe(II)-siderophore + NAD(+) + H(+) = 2 a Fe(III)-siderophore + NADH. In terms of biological role, ferric chelate reductase involved in iron reduction in roots. May participate in the transport of electrons to a Fe(3+) ion via FAD and heme intermediates. The chain is Probable ferric reduction oxidase 1 (FRO1) from Arabidopsis thaliana (Mouse-ear cress).